A 387-amino-acid chain; its full sequence is 1-hydroxy-2-naphthoate 1,2-dioxygenasee (387 aa).

Cupin type-2 domains lie at 103-171 (FQLV…VWLD) and 271-337 (VQRL…VLLF).

As to quaternary structure, homohexamer. Fe(2+) serves as cofactor.

The enzyme catalyses 1-hydroxy-2-naphthoate + O2 = (3Z)-4-(2-carboxyphenyl)-2-oxobut-3-enoate + H(+). Its function is as follows. Dioxygenase involved in phenanthrene catabolism by mediating cleavage of 1-hydroxy-2-naphthoate. The sequence is that of 1-hydroxy-2-naphthoate 1,2-dioxygenasee (phdI) from Nocardioides sp. (strain KP7).